A 431-amino-acid polypeptide reads, in one-letter code: Serine--tRNA ligase (431 aa).

Residue 235–237 (TAE) participates in L-serine binding. ATP contacts are provided by residues 266–268 (RRE) and valine 282. Residue glutamate 289 participates in L-serine binding. Position 353-356 (353-356 (EASS)) interacts with ATP. Serine 389 is a binding site for L-serine.

It belongs to the class-II aminoacyl-tRNA synthetase family. Type-1 seryl-tRNA synthetase subfamily. In terms of assembly, homodimer. The tRNA molecule binds across the dimer.

The protein localises to the cytoplasm. It carries out the reaction tRNA(Ser) + L-serine + ATP = L-seryl-tRNA(Ser) + AMP + diphosphate + H(+). It catalyses the reaction tRNA(Sec) + L-serine + ATP = L-seryl-tRNA(Sec) + AMP + diphosphate + H(+). It functions in the pathway aminoacyl-tRNA biosynthesis; selenocysteinyl-tRNA(Sec) biosynthesis; L-seryl-tRNA(Sec) from L-serine and tRNA(Sec): step 1/1. Functionally, catalyzes the attachment of serine to tRNA(Ser). Is also able to aminoacylate tRNA(Sec) with serine, to form the misacylated tRNA L-seryl-tRNA(Sec), which will be further converted into selenocysteinyl-tRNA(Sec). This Prosthecochloris aestuarii (strain DSM 271 / SK 413) protein is Serine--tRNA ligase.